Here is a 104-residue protein sequence, read N- to C-terminus: ATP-dependent Clp protease adapter protein ClpS (104 aa).

It belongs to the ClpS family. Binds to the N-terminal domain of the chaperone ClpA.

In terms of biological role, involved in the modulation of the specificity of the ClpAP-mediated ATP-dependent protein degradation. This Bordetella bronchiseptica (strain ATCC BAA-588 / NCTC 13252 / RB50) (Alcaligenes bronchisepticus) protein is ATP-dependent Clp protease adapter protein ClpS.